The following is a 388-amino-acid chain: Succinate--CoA ligase [ADP-forming] subunit beta (388 aa).

Residues 9–244 (KEIFARYGLP…PTQESELEVK (236 aa)) form the ATP-grasp domain. ATP is bound by residues Lys46, 53-55 (GRG), Glu99, Thr102, and Glu107. Residues Asn199 and Asp213 each contribute to the Mg(2+) site. Substrate contacts are provided by residues Asn264 and 321–323 (GIL).

Belongs to the succinate/malate CoA ligase beta subunit family. In terms of assembly, heterotetramer of two alpha and two beta subunits. Mg(2+) serves as cofactor.

The enzyme catalyses succinate + ATP + CoA = succinyl-CoA + ADP + phosphate. The catalysed reaction is GTP + succinate + CoA = succinyl-CoA + GDP + phosphate. It participates in carbohydrate metabolism; tricarboxylic acid cycle; succinate from succinyl-CoA (ligase route): step 1/1. Functionally, succinyl-CoA synthetase functions in the citric acid cycle (TCA), coupling the hydrolysis of succinyl-CoA to the synthesis of either ATP or GTP and thus represents the only step of substrate-level phosphorylation in the TCA. The beta subunit provides nucleotide specificity of the enzyme and binds the substrate succinate, while the binding sites for coenzyme A and phosphate are found in the alpha subunit. This chain is Succinate--CoA ligase [ADP-forming] subunit beta, found in Persephonella marina (strain DSM 14350 / EX-H1).